A 449-amino-acid chain; its full sequence is Bifunctional protein GlmU (449 aa).

Residues 1 to 231 (MVRNCLSIVL…FDNVIGINNC (231 aa)) form a pyrophosphorylase region. UDP-N-acetyl-alpha-D-glucosamine-binding positions include 10–13 (LAAG), Lys24, Gln77, and 82–83 (GT). Position 107 (Asp107) interacts with Mg(2+). The UDP-N-acetyl-alpha-D-glucosamine site is built by Gly143, Glu157, Asn172, and Asn229. Asn229 provides a ligand contact to Mg(2+). The linker stretch occupies residues 232–252 (FELFEADALWQKRKARDLMLS). An N-acetyltransferase region spans residues 253–449 (GVTILKPESV…AHLSKNKRNK (197 aa)). Arg318 and Lys336 together coordinate UDP-N-acetyl-alpha-D-glucosamine. The active-site Proton acceptor is His348. Residues Tyr351 and Asn362 each contribute to the UDP-N-acetyl-alpha-D-glucosamine site. Residues Ala365, 371–372 (NY), Ser390, Ser408, and Arg425 each bind acetyl-CoA.

The protein in the N-terminal section; belongs to the N-acetylglucosamine-1-phosphate uridyltransferase family. In the C-terminal section; belongs to the transferase hexapeptide repeat family. Homotrimer. Mg(2+) is required as a cofactor.

The protein localises to the cytoplasm. It carries out the reaction alpha-D-glucosamine 1-phosphate + acetyl-CoA = N-acetyl-alpha-D-glucosamine 1-phosphate + CoA + H(+). It catalyses the reaction N-acetyl-alpha-D-glucosamine 1-phosphate + UTP + H(+) = UDP-N-acetyl-alpha-D-glucosamine + diphosphate. The protein operates within nucleotide-sugar biosynthesis; UDP-N-acetyl-alpha-D-glucosamine biosynthesis; N-acetyl-alpha-D-glucosamine 1-phosphate from alpha-D-glucosamine 6-phosphate (route II): step 2/2. It participates in nucleotide-sugar biosynthesis; UDP-N-acetyl-alpha-D-glucosamine biosynthesis; UDP-N-acetyl-alpha-D-glucosamine from N-acetyl-alpha-D-glucosamine 1-phosphate: step 1/1. Its pathway is bacterial outer membrane biogenesis; LPS lipid A biosynthesis. Functionally, catalyzes the last two sequential reactions in the de novo biosynthetic pathway for UDP-N-acetylglucosamine (UDP-GlcNAc). The C-terminal domain catalyzes the transfer of acetyl group from acetyl coenzyme A to glucosamine-1-phosphate (GlcN-1-P) to produce N-acetylglucosamine-1-phosphate (GlcNAc-1-P), which is converted into UDP-GlcNAc by the transfer of uridine 5-monophosphate (from uridine 5-triphosphate), a reaction catalyzed by the N-terminal domain. The chain is Bifunctional protein GlmU from Bartonella bacilliformis (strain ATCC 35685 / KC583 / Herrer 020/F12,63).